Consider the following 458-residue polypeptide: Transcription factor PCF5 (458 aa).

Disordered stretches follow at residues 1 to 103 (MGDA…RGPR), 159 to 182 (GAGA…ENSD), 278 to 299 (MFHH…TTQQ), and 424 to 458 (RLPA…ASHH). Residues 65–74 (RGGGGGGGGE) are compositionally biased toward gly residues. One can recognise a TCP domain in the interval 89-147 (RKDRHSKVCTARGPRDRRVRLSAHTAIQFYDVQDRLGYDRPSKAVDWLIKNAKDAIDKL).

In terms of assembly, forms homodimers and heterodimers.

It localises to the nucleus. Its function is as follows. Transcription activator. Binds the promoter core sequence 5'-GGNCC-3'. This is Transcription factor PCF5 (PCF5) from Oryza sativa subsp. japonica (Rice).